A 624-amino-acid polypeptide reads, in one-letter code: Chaperone protein HtpG (624 aa).

Residues 1-336 form an a; substrate-binding region; the sequence is MKGQETRGFQ…SNDLPLNVSR (336 aa). A b region spans residues 337-552; it reads EILQDSTVTR…ADEMSTQMAK (216 aa). The segment at 553–624 is c; it reads LFAAAGQSVP…IRRMNQLLVS (72 aa).

Belongs to the heat shock protein 90 family. In terms of assembly, homodimer.

The protein resides in the cytoplasm. In terms of biological role, molecular chaperone. Has ATPase activity. The polypeptide is Chaperone protein HtpG (Salmonella typhi).